Reading from the N-terminus, the 558-residue chain is Type I restriction enzyme MjaIX methylase subunit (558 aa).

Residues 1–37 (MATLDKFLSIKENDEKTKKKESKKKSSKSNKTSESLV) are disordered. A compositionally biased stretch (basic and acidic residues) spans 8-18 (LSIKENDEKTK). Over residues 19 to 28 (KKESKKKSSK) the composition is skewed to basic residues. S-adenosyl-L-methionine contacts are provided by residues 227 to 232 (KFYTPR), 256 to 258 (SGG), and D283.

It belongs to the N(4)/N(6)-methyltransferase family. The type I restriction/modification system is composed of three polypeptides R, M and S.

It carries out the reaction a 2'-deoxyadenosine in DNA + S-adenosyl-L-methionine = an N(6)-methyl-2'-deoxyadenosine in DNA + S-adenosyl-L-homocysteine + H(+). Functionally, the subtype gamma methyltransferase (M) subunit of a type I restriction enzyme. The M and S subunits together form a methyltransferase (MTase) that methylates A-3 on the top and A-2 on the bottom strand of the sequence 5'-CCAN(5)GTR-3'. In the presence of the R subunit the complex can also act as an endonuclease, binding to the same target sequence but cutting the DNA some distance from this site. Whether the DNA is cut or modified depends on the methylation state of the target sequence. When the target site is unmodified, the DNA is cut. When the target site is hemimethylated, the complex acts as a maintenance MTase modifying the DNA so that both strands become methylated. After locating a non-methylated recognition site, the enzyme complex serves as a molecular motor that translocates DNA in an ATP-dependent manner until a collision occurs that triggers cleavage. This is Type I restriction enzyme MjaIX methylase subunit from Methanocaldococcus jannaschii (strain ATCC 43067 / DSM 2661 / JAL-1 / JCM 10045 / NBRC 100440) (Methanococcus jannaschii).